We begin with the raw amino-acid sequence, 139 residues long: Large ribosomal subunit protein bL17 (139 aa).

This sequence belongs to the bacterial ribosomal protein bL17 family. As to quaternary structure, part of the 50S ribosomal subunit. Contacts protein L32.

This chain is Large ribosomal subunit protein bL17, found in Myxococcus xanthus (strain DK1622).